The following is a 208-amino-acid chain: uncharacterized protein (208 aa).

This is an uncharacterized protein from Legionella pneumophila subsp. pneumophila (strain Philadelphia 1 / ATCC 33152 / DSM 7513).